The sequence spans 265 residues: Energy-coupling factor transporter transmembrane protein EcfT (265 aa).

A run of 5 helical transmembrane segments spans residues 32 to 52 (MVLLFVIDDFTGYAFPAVFII), 72 to 92 (LVIIIVLTFVLNLFMIKGRVI), 115 to 135 (LIMLIVGTSLLTLTTSPIALT), 150 to 170 (VPAHELAMMMTIALRFIPTLM), and 245 to 265 (LAAFIATGLLAVGSIMSRFIW).

This sequence belongs to the energy-coupling factor EcfT family. Forms a stable energy-coupling factor (ECF) transporter complex composed of 2 membrane-embedded substrate-binding proteins (S component), 2 ATP-binding proteins (A component) and 2 transmembrane proteins (T component). May be able to interact with more than 1 S component at a time.

It is found in the cell membrane. Functionally, transmembrane (T) component of an energy-coupling factor (ECF) ABC-transporter complex. Unlike classic ABC transporters this ECF transporter provides the energy necessary to transport a number of different substrates. In Thermosediminibacter oceani (strain ATCC BAA-1034 / DSM 16646 / JW/IW-1228P), this protein is Energy-coupling factor transporter transmembrane protein EcfT.